The chain runs to 446 residues: Glycerol-3-phosphate acyltransferase 3 (446 aa).

3 helical membrane-spanning segments follow: residues 25–45, 142–162, and 164–184; these read LPSA…VLVK, LRLT…LLPL, and FTLA…VGQL. The HXXXXD motif signature appears at 232 to 237; sequence HTSPID. A helical transmembrane segment spans residues 352 to 372; the sequence is IVSYLLRIMTSWAIVCHVWYM. The tract at residues 418-446 is disordered; that stretch reads FKEEQQKNYSKMLVRNGSQGNLPAGTESD.

The protein belongs to the 1-acyl-sn-glycerol-3-phosphate acyltransferase family.

It is found in the endoplasmic reticulum membrane. It catalyses the reaction sn-glycerol 3-phosphate + an acyl-CoA = a 1-acyl-sn-glycero-3-phosphate + CoA. It carries out the reaction a 1-acyl-sn-glycero-3-phosphate + an acyl-CoA = a 1,2-diacyl-sn-glycero-3-phosphate + CoA. The enzyme catalyses dodecanoyl-CoA + sn-glycerol 3-phosphate = 1-dodecanoyl-sn-glycerol 3-phosphate + CoA. The catalysed reaction is sn-glycerol 3-phosphate + hexadecanoyl-CoA = 1-hexadecanoyl-sn-glycero-3-phosphate + CoA. It catalyses the reaction sn-glycerol 3-phosphate + (9Z)-octadecenoyl-CoA = 1-(9Z-octadecenoyl)-sn-glycero-3-phosphate + CoA. It carries out the reaction (9Z,12Z)-octadecadienoyl-CoA + sn-glycerol 3-phosphate = 1-(9Z,12Z)-octadecadienoyl-sn-glycero-3-phosphate + CoA. The enzyme catalyses 1-tetradecanoyl-sn-glycerol 3-phosphate + (9Z)-octadecenoyl-CoA = 1-tetradecanoyl-2-(9Z)-octadecenoyl-sn-glycero-3-phosphate + CoA. The catalysed reaction is 1-hexadecanoyl-sn-glycero-3-phosphate + (9Z)-octadecenoyl-CoA = 1-hexadecanoyl-2-(9Z-octadecenoyl)-sn-glycero-3-phosphate + CoA. It catalyses the reaction 1-(9Z-octadecenoyl)-sn-glycero-3-phosphate + (9Z)-octadecenoyl-CoA = 1,2-di-(9Z-octadecenoyl)-sn-glycero-3-phosphate + CoA. It carries out the reaction 1-(6Z,9Z,12Z-octadecatrienoyl)-sn-glycero-3-phosphate + (9Z)-octadecenoyl-CoA = (6Z,9Z,12Z)-octadecatrienoyl-2-(9Z)-octadecenoyl-sn-glycero-3-phosphate + CoA. The enzyme catalyses 1-(9Z,12Z,15Z)-octadecatrienoyl-sn-glycero-3-phosphate + (9Z)-octadecenoyl-CoA = 1-(9Z,12Z,15Z)-octadecatrienoyl-2-(9Z)-octadecenoyl-sn-glycero-3-phosphate + CoA. The catalysed reaction is 1-(9Z-octadecenoyl)-sn-glycero-3-phosphate + tetradecanoyl-CoA = 1-(9Z)-octadecenoyl-2-tetradecanoyl-sn-glycero-3-phosphate + CoA. It catalyses the reaction 1-(9Z-octadecenoyl)-sn-glycero-3-phosphate + hexadecanoyl-CoA = 1-(9Z)-octadecenoyl-2-hexadecanoyl-sn-glycero-3-phosphate + CoA. It carries out the reaction 1-(9Z-octadecenoyl)-sn-glycero-3-phosphate + octadecanoyl-CoA = 1-(9Z-octadecenoyl)-2-octadecanoyl-sn-glycero-3-phosphate + CoA. The enzyme catalyses 1-(9Z-octadecenoyl)-sn-glycero-3-phosphate + (9Z,12Z)-octadecadienoyl-CoA = 1-(9Z)-octadecenoyl-2-(9Z,12Z)-octadecadienoyl-sn-glycero-3-phosphate + CoA. The catalysed reaction is 1-(5Z,8Z,11Z,14Z-eicosatetraenoyl)-sn-glycero-3-phosphate + (9Z)-octadecenoyl-CoA = 1-(5Z,8Z,11Z,14Z)-eicosatetraenoyl-2-(9Z)-octadecenoyl-sn-glycero-3-phosphate + CoA. It participates in glycerolipid metabolism; triacylglycerol biosynthesis. The protein operates within phospholipid metabolism; CDP-diacylglycerol biosynthesis; CDP-diacylglycerol from sn-glycerol 3-phosphate: step 1/3. Functionally, converts glycerol-3-phosphate to 1-acyl-sn-glycerol-3-phosphate (lysophosphatidic acid or LPA) by incorporating an acyl moiety at the sn-1 position of the glycerol backbone. Also converts LPA into 1,2-diacyl-sn-glycerol-3-phosphate (phosphatidic acid or PA) by incorporating an acyl moiety at the sn-2 position of the glycerol backbone. Protects cells against lipotoxicity. The protein is Glycerol-3-phosphate acyltransferase 3 of Gallus gallus (Chicken).